The sequence spans 147 residues: MFQGAVALSLDAKGRLAIPARHRDALTPDGAPLVMTVHPHRCLLVYPLTAWEPIREKITSLPGMDQATLSFKRMLVGFAQEETLDAAGRVLVAQSLRQFAALDKQVWLVGQGTHFELWSDAGWQKQQEAMLALVDNPLPAGLENFVL.

2 SpoVT-AbrB domains span residues 5–50 (AVAL…PLTA) and 79–122 (AQEE…SDAG).

It belongs to the MraZ family. As to quaternary structure, forms oligomers.

Its subcellular location is the cytoplasm. The protein resides in the nucleoid. The chain is Transcriptional regulator MraZ from Azoarcus sp. (strain BH72).